The primary structure comprises 405 residues: 4-hydroxy-3-methylbut-2-en-1-yl diphosphate synthase (flavodoxin) (405 aa).

Positions 297, 300, 343, and 350 each coordinate [4Fe-4S] cluster.

It belongs to the IspG family. Requires [4Fe-4S] cluster as cofactor.

The enzyme catalyses (2E)-4-hydroxy-3-methylbut-2-enyl diphosphate + oxidized [flavodoxin] + H2O + 2 H(+) = 2-C-methyl-D-erythritol 2,4-cyclic diphosphate + reduced [flavodoxin]. The protein operates within isoprenoid biosynthesis; isopentenyl diphosphate biosynthesis via DXP pathway; isopentenyl diphosphate from 1-deoxy-D-xylulose 5-phosphate: step 5/6. Converts 2C-methyl-D-erythritol 2,4-cyclodiphosphate (ME-2,4cPP) into 1-hydroxy-2-methyl-2-(E)-butenyl 4-diphosphate. This chain is 4-hydroxy-3-methylbut-2-en-1-yl diphosphate synthase (flavodoxin), found in Francisella tularensis subsp. tularensis (strain FSC 198).